Here is a 306-residue protein sequence, read N- to C-terminus: Ribosomal protein L11 methyltransferase (306 aa).

The S-adenosyl-L-methionine site is built by Thr-139, Gly-173, Asp-195, and Asn-242.

Belongs to the methyltransferase superfamily. PrmA family.

The protein resides in the cytoplasm. It carries out the reaction L-lysyl-[protein] + 3 S-adenosyl-L-methionine = N(6),N(6),N(6)-trimethyl-L-lysyl-[protein] + 3 S-adenosyl-L-homocysteine + 3 H(+). Its function is as follows. Methylates ribosomal protein L11. The chain is Ribosomal protein L11 methyltransferase from Trichormus variabilis (strain ATCC 29413 / PCC 7937) (Anabaena variabilis).